Reading from the N-terminus, the 142-residue chain is Hemoglobin subunit alpha (142 aa).

N-acetylserine is present on S1. The 142-residue stretch at 1-142 folds into the Globin domain; the sequence is SLSDKDKAAV…VALALAERYR (142 aa). H59 contributes to the O2 binding site. A heme b-binding site is contributed by H88.

This sequence belongs to the globin family. In terms of assembly, heterotetramer of two alpha chains and two beta chains. In terms of tissue distribution, red blood cells.

Its function is as follows. Involved in oxygen transport from gills to the various peripheral tissues. The protein is Hemoglobin subunit alpha (hba) of Gymnodraco acuticeps (Antarctic dragonfish).